Consider the following 218-residue polypeptide: Probable GTP-binding protein EngB (218 aa).

The region spanning 21-192 is the EngB-type G domain; it reads NAPQIALAGR…WQELHRLAFP (172 aa). GTP is bound by residues 29 to 36, 56 to 60, 75 to 78, 142 to 145, and 171 to 173; these read GRSNVGKS, GKTRS, DLPG, TKAD, and FSS. Residues serine 36 and threonine 58 each contribute to the Mg(2+) site. The disordered stretch occupies residues 194-218; the sequence is MAFDTPSDGAPEPADEPEAASERAE.

The protein belongs to the TRAFAC class TrmE-Era-EngA-EngB-Septin-like GTPase superfamily. EngB GTPase family. It depends on Mg(2+) as a cofactor.

Its function is as follows. Necessary for normal cell division and for the maintenance of normal septation. In Oleidesulfovibrio alaskensis (strain ATCC BAA-1058 / DSM 17464 / G20) (Desulfovibrio alaskensis), this protein is Probable GTP-binding protein EngB.